The sequence spans 352 residues: N-acetyl-gamma-glutamyl-phosphate reductase (352 aa).

Cys-155 is a catalytic residue.

Belongs to the NAGSA dehydrogenase family. Type 1 subfamily.

Its subcellular location is the cytoplasm. The enzyme catalyses N-acetyl-L-glutamate 5-semialdehyde + phosphate + NADP(+) = N-acetyl-L-glutamyl 5-phosphate + NADPH + H(+). It functions in the pathway amino-acid biosynthesis; L-arginine biosynthesis; N(2)-acetyl-L-ornithine from L-glutamate: step 3/4. In terms of biological role, catalyzes the NADPH-dependent reduction of N-acetyl-5-glutamyl phosphate to yield N-acetyl-L-glutamate 5-semialdehyde. The chain is N-acetyl-gamma-glutamyl-phosphate reductase from Synechococcus elongatus (strain ATCC 33912 / PCC 7942 / FACHB-805) (Anacystis nidulans R2).